We begin with the raw amino-acid sequence, 347 residues long: Probable dual-specificity RNA methyltransferase RlmN (347 aa).

Residue E90 is the Proton acceptor of the active site. Positions 96 to 326 (YKHGNSICIS…VTVRREMGSD (231 aa)) constitute a Radical SAM core domain. The cysteines at positions 103 and 331 are disulfide-linked. Residues C110, C114, and C117 each contribute to the [4Fe-4S] cluster site. S-adenosyl-L-methionine contacts are provided by residues 157 to 158 (GE), S189, 212 to 214 (SLH), and N288. The active-site S-methylcysteine intermediate is C331.

It belongs to the radical SAM superfamily. RlmN family. [4Fe-4S] cluster is required as a cofactor.

The protein localises to the cytoplasm. The catalysed reaction is adenosine(2503) in 23S rRNA + 2 reduced [2Fe-2S]-[ferredoxin] + 2 S-adenosyl-L-methionine = 2-methyladenosine(2503) in 23S rRNA + 5'-deoxyadenosine + L-methionine + 2 oxidized [2Fe-2S]-[ferredoxin] + S-adenosyl-L-homocysteine. The enzyme catalyses adenosine(37) in tRNA + 2 reduced [2Fe-2S]-[ferredoxin] + 2 S-adenosyl-L-methionine = 2-methyladenosine(37) in tRNA + 5'-deoxyadenosine + L-methionine + 2 oxidized [2Fe-2S]-[ferredoxin] + S-adenosyl-L-homocysteine. Its function is as follows. Specifically methylates position 2 of adenine 2503 in 23S rRNA and position 2 of adenine 37 in tRNAs. This is Probable dual-specificity RNA methyltransferase RlmN from Clostridium botulinum (strain Eklund 17B / Type B).